The primary structure comprises 229 residues: Large ribosomal subunit protein uL1 (229 aa).

This sequence belongs to the universal ribosomal protein uL1 family. As to quaternary structure, part of the 50S ribosomal subunit.

Its function is as follows. Binds directly to 23S rRNA. The L1 stalk is quite mobile in the ribosome, and is involved in E site tRNA release. Functionally, protein L1 is also a translational repressor protein, it controls the translation of the L11 operon by binding to its mRNA. The polypeptide is Large ribosomal subunit protein uL1 (Chlorobium chlorochromatii (strain CaD3)).